Consider the following 491-residue polypeptide: Cytochrome P450 2B4 (491 aa).

A Phosphoserine; by PKA modification is found at serine 128. Residue cysteine 436 participates in heme binding.

The protein belongs to the cytochrome P450 family. The cofactor is heme.

The protein localises to the endoplasmic reticulum membrane. The protein resides in the microsome membrane. The enzyme catalyses an organic molecule + reduced [NADPH--hemoprotein reductase] + O2 = an alcohol + oxidized [NADPH--hemoprotein reductase] + H2O + H(+). In terms of biological role, cytochromes P450 are a group of heme-thiolate monooxygenases. In liver microsomes, this enzyme is involved in an NADPH-dependent electron transport pathway. It oxidizes a variety of structurally unrelated compounds, including steroids, fatty acids, and xenobiotics. In the epoxidation of arachidonic acid it has a unique preference for the 5,6-olefin. This is Cytochrome P450 2B4 (CYP2B4) from Oryctolagus cuniculus (Rabbit).